A 1200-amino-acid polypeptide reads, in one-letter code: Nuclear pore complex protein Nup133 (1200 aa).

Positions 1–28 (MERNLQKQLYGISRESSPGARRYSMPAA) are disordered.

Belongs to the nucleoporin Nup133 family. In terms of assembly, forms part of the Nup107-Nup160 subcomplex in the nuclear pore.

The protein localises to the nucleus. It is found in the nuclear pore complex. Its function is as follows. Probable component of the nuclear pore complex (NPC). Plays a role in NPC assembly and/or maintenance. In Drosophila melanogaster (Fruit fly), this protein is Nuclear pore complex protein Nup133.